Reading from the N-terminus, the 287-residue chain is Diphthine methyl ester synthase (287 aa).

Residues Leu-9, Asp-84, Gly-87, 112-113, Val-163, Val-221, and His-248 each bind S-adenosyl-L-methionine; that span reads SI.

Belongs to the diphthine synthase family.

It is found in the cytoplasm. The enzyme catalyses 2-[(3S)-amino-3-carboxypropyl]-L-histidyl-[translation elongation factor 2] + 4 S-adenosyl-L-methionine = diphthine methyl ester-[translation elongation factor 2] + 4 S-adenosyl-L-homocysteine + 3 H(+). The protein operates within protein modification; peptidyl-diphthamide biosynthesis. In terms of biological role, S-adenosyl-L-methionine-dependent methyltransferase that catalyzes four methylations of the modified target histidine residue in translation elongation factor 2 (EF-2), to form an intermediate called diphthine methyl ester. The four successive methylation reactions represent the second step of diphthamide biosynthesis. This is Diphthine methyl ester synthase (DPH5) from Gibberella zeae (strain ATCC MYA-4620 / CBS 123657 / FGSC 9075 / NRRL 31084 / PH-1) (Wheat head blight fungus).